An 89-amino-acid chain; its full sequence is Small ribosomal subunit protein uS14A (89 aa).

The protein belongs to the universal ribosomal protein uS14 family. In terms of assembly, part of the 30S ribosomal subunit. Contacts proteins S3 and S10.

Functionally, binds 16S rRNA, required for the assembly of 30S particles and may also be responsible for determining the conformation of the 16S rRNA at the A site. The polypeptide is Small ribosomal subunit protein uS14A (Listeria monocytogenes serovar 1/2a (strain ATCC BAA-679 / EGD-e)).